The chain runs to 199 residues: NAD(P)H quinone oxidoreductase PST3 (199 aa).

Positions 5 to 193 (VAIIIYSLYH…EIAFIQGKSF (189 aa)) constitute a Flavodoxin-like domain. FMN-binding positions include 11 to 15 (SLYHH) and 111 to 165 (IFVS…SPYG).

This sequence belongs to the WrbA family. The cofactor is FMN.

It localises to the cell membrane. It carries out the reaction a quinone + NADH + H(+) = a quinol + NAD(+). It catalyses the reaction a quinone + NADPH + H(+) = a quinol + NADP(+). Flavodoxin-like protein (FLP) that plays a role in cell wall integrity, oxidative stress protection and virulence. FLPs act as NAD(P)H quinone oxidoreductases. Reduces ubiquinone (coenzyme Q), enabling it to serve as an antioxidant in the membrane. The sequence is that of NAD(P)H quinone oxidoreductase PST3 from Candida albicans (strain SC5314 / ATCC MYA-2876) (Yeast).